Reading from the N-terminus, the 484-residue chain is tRNA nucleotidyltransferase cca2 (484 aa).

A B/A element motif is present at residues 122–124 (RAE). The segment at 125–142 (SYDDKSRIPSVTPGTVET) is flexible loop. The ERhxxExxxhh motif signature appears at 234–244 (ERVGEEIEKML).

This sequence belongs to the tRNA nucleotidyltransferase/poly(A) polymerase family.

It is found in the cytoplasm. The catalysed reaction is a tRNA with a 3' CC end + ATP = a tRNA with a 3' CCA end + diphosphate. In terms of biological role, tRNA nucleotidyltransferase involved in the synthesis of the tRNA CCA terminus. In contrast to what is usually observed in eukaryotes for which one enzyme synthesizes the whole tRNA CCA terminus, in S.pombe, cca1 specifically adds two cytidine residues to a tRNA substrate lacking this sequence while cca2 specifically adds the terminal adenosine residue thereby completing the CCA sequence. This chain is tRNA nucleotidyltransferase cca2, found in Schizosaccharomyces pombe (strain 972 / ATCC 24843) (Fission yeast).